Reading from the N-terminus, the 192-residue chain is Probable GTP-binding protein EngB (192 aa).

In terms of domain architecture, EngB-type G spans 22 to 192; sequence SLPEIVFVGR…LLEQLENYTG (171 aa). Residues 30–37, 57–61, 75–78, 142–145, and 172–174 each bind GTP; these read GRSNVGKS, GKTQL, DLPG, TKYD, and YSA. Mg(2+) is bound by residues Ser-37 and Thr-59.

Belongs to the TRAFAC class TrmE-Era-EngA-EngB-Septin-like GTPase superfamily. EngB GTPase family. The cofactor is Mg(2+).

In terms of biological role, necessary for normal cell division and for the maintenance of normal septation. The chain is Probable GTP-binding protein EngB from Prosthecochloris aestuarii (strain DSM 271 / SK 413).